The primary structure comprises 626 residues: Probable potassium transport system protein Kup (626 aa).

The next 13 membrane-spanning stretches (helical) occupy residues 8-28 (VALPAMTLAALGVVFGDIGTS), 44-64 (ISEATVFGILSLIFWCITLSI), 102-122 (IYLIALGFVGASLFFGDGIIT), 139-159 (PAFDRWLIPIGLGILTALFMV), 171-191 (FGPITMLWFISIGALGLYSII), 196-216 (ILWFINPIWAIEFAIHQPFVA), 217-237 (FVAMGSVVLTMTGGEALYADM), 249-269 (WFIVVCPSLMLNYAGQGALLL), 281-301 (LLVPEWALFPMIGLATAAAVI), 339-359 (IYVPFINWVLYISVFFLIILF), 377-397 (MLCVTILISVLAYGAWGWPWW), 399-419 (VTLFAVPFLALDGIFVASTSL), and 421-441 (ILSGGWVPFVIGVVVFTILMT).

Belongs to the HAK/KUP transporter (TC 2.A.72) family.

It is found in the cell inner membrane. The catalysed reaction is K(+)(in) + H(+)(in) = K(+)(out) + H(+)(out). Functionally, transport of potassium into the cell. Likely operates as a K(+):H(+) symporter. This is Probable potassium transport system protein Kup from Acinetobacter baylyi (strain ATCC 33305 / BD413 / ADP1).